The following is a 270-amino-acid chain: Formamidopyrimidine-DNA glycosylase (270 aa).

Pro-2 (schiff-base intermediate with DNA) is an active-site residue. The Proton donor role is filled by Glu-3. The active-site Proton donor; for beta-elimination activity is Lys-58. Residues His-92, Arg-111, and Arg-153 each coordinate DNA. An FPG-type zinc finger spans residues 238 to 270; the sequence is SVYGASVCPVCGGALRQIRLAQRGTWFCPRCQR. Residue Arg-260 is the Proton donor; for delta-elimination activity of the active site.

The protein belongs to the FPG family. Monomer. Requires Zn(2+) as cofactor.

It carries out the reaction Hydrolysis of DNA containing ring-opened 7-methylguanine residues, releasing 2,6-diamino-4-hydroxy-5-(N-methyl)formamidopyrimidine.. The catalysed reaction is 2'-deoxyribonucleotide-(2'-deoxyribose 5'-phosphate)-2'-deoxyribonucleotide-DNA = a 3'-end 2'-deoxyribonucleotide-(2,3-dehydro-2,3-deoxyribose 5'-phosphate)-DNA + a 5'-end 5'-phospho-2'-deoxyribonucleoside-DNA + H(+). Involved in base excision repair of DNA damaged by oxidation or by mutagenic agents. Acts as a DNA glycosylase that recognizes and removes damaged bases. Has a preference for oxidized purines, such as 7,8-dihydro-8-oxoguanine (8-oxoG). Has AP (apurinic/apyrimidinic) lyase activity and introduces nicks in the DNA strand. Cleaves the DNA backbone by beta-delta elimination to generate a single-strand break at the site of the removed base with both 3'- and 5'-phosphates. The sequence is that of Formamidopyrimidine-DNA glycosylase from Halorhodospira halophila (strain DSM 244 / SL1) (Ectothiorhodospira halophila (strain DSM 244 / SL1)).